A 156-amino-acid polypeptide reads, in one-letter code: Transcriptional repressor NrdR (156 aa).

A zinc finger spans residues 3-34 (CPKCSSTHSRVVDSRHADDANAIRRRRECENC). Residues 49–139 (LIVVKKDGTR…VYKEFKDVDQ (91 aa)) enclose the ATP-cone domain.

Belongs to the NrdR family. Requires Zn(2+) as cofactor.

In terms of biological role, negatively regulates transcription of bacterial ribonucleotide reductase nrd genes and operons by binding to NrdR-boxes. The polypeptide is Transcriptional repressor NrdR (Staphylococcus haemolyticus (strain JCSC1435)).